A 194-amino-acid chain; its full sequence is A-type ATP synthase subunit E (194 aa).

A disordered region spans residues Asp-35–Glu-56. The span at Asp-41–Glu-56 shows a compositional bias: basic and acidic residues.

It belongs to the V-ATPase E subunit family. As to quaternary structure, has multiple subunits with at least A(3), B(3), C, D, E, F, H, I and proteolipid K(x).

It localises to the cell membrane. Component of the A-type ATP synthase that produces ATP from ADP in the presence of a proton gradient across the membrane. The protein is A-type ATP synthase subunit E of Haloarcula marismortui (strain ATCC 43049 / DSM 3752 / JCM 8966 / VKM B-1809) (Halobacterium marismortui).